Reading from the N-terminus, the 2003-residue chain is Histone acetyltransferase KAT6A (2003 aa).

An SAMD1-like winged helix (WH) domain is found at 1-77; that stretch reads MVKLANPLYT…LNSYKDPDNP (77 aa). Residues 1–144 are required for activation of RUNX1-1; the sequence is MVKLANPLYT…CGGSAAPGFH (144 aa). The tract at residues 52 to 166 is required for nuclear localization; the sequence is ELSVKDGTIL…HGRLLKDGPL (115 aa). The H15 domain occupies 95–171; that stretch reads QSVDWNKLLK…KDGPLYRLNT (77 aa). An interaction with PML region spans residues 144-663; sequence HQQLRLAIKR…RKGYGRFLID (520 aa). Lysine 172 is subject to N6-acetyllysine. 2 consecutive PHD-type zinc fingers follow at residues 206-265 and 262-313; these read IPIC…CKTC and CKTC…CRPR. Residues 312–663 form an interaction with RUNX1-1 region; sequence PRKKGRKLLQ…RKGYGRFLID (352 aa). Residues 336–377 are disordered; it reads GRPKNRLKKQNTVSKGPFSKVRTGPGRGRKRKITVSSQSASS. N6-acetyllysine occurs at positions 350 and 355. Position 369 is a phosphothreonine; by PKB/AKT1 (threonine 369). Position 419 is a phosphoserine (serine 419). The segment at 439-466 is disordered; sequence RKKGNRKSSTSDWPTDNQDGWESKQENE. Positions 445 to 458 are enriched in polar residues; it reads KSSTSDWPTDNQDG. Serine 472 carries the post-translational modification Phosphoserine. Positions 487–777 are catalytic; sequence IQEQALQKVG…VDPECLRWTP (291 aa). Positions 503–777 constitute an MYST-type HAT domain; sequence PQVRCPSVIE…VDPECLRWTP (275 aa). The mediates interaction with BRPF1, required for histone H3 acetyltransferase activity stretch occupies residues 506-809; that stretch reads RCPSVIEFGK…EPQGQERELE (304 aa). The C2HC MYST-type zinc finger occupies 536–561; the sequence is LYLCEFCLKYMKSRTILQQHMKKCGW. Lysine 603 carries the N6-acetyllysine; by autocatalysis modification. Acetyl-CoA-binding positions include 644 to 648 and 653 to 659; these read SCIMI and QRKGYGR. The Proton donor/acceptor role is filled by glutamate 679. Position 683 (serine 683) interacts with acetyl-CoA. A disordered region spans residues 784-939; the sequence is VVSEDEDEEA…DGKPDIPKGR (156 aa). A Phosphoserine modification is found at serine 786. Residues 786 to 798 are compositionally biased toward acidic residues; sequence SEDEDEEADEGEK. Residues 799-841 show a composition bias toward basic and acidic residues; the sequence is EEPQGQERELETRVKVGKSVSREKKDQESSSLIETDKKPEVKE. N6-acetyllysine occurs at positions 813 and 816. Residue lysine 836 forms a Glycyl lysine isopeptide (Lys-Gly) (interchain with G-Cter in SUMO2) linkage. The span at 866-875 shows a compositional bias: basic residues; it reads RRGRCGRKNR. The span at 876 to 890 shows a compositional bias: basic and acidic residues; sequence KTQERFGDKDSKMLV. Phosphotyrosine is present on tyrosine 901. Positions 904–917 are enriched in basic and acidic residues; that stretch reads CEEKSETSQERFTE. Phosphoserine occurs at positions 941 and 954. A disordered region spans residues 983 to 1083; sequence GFSESSEEEE…EEEESELFPR (101 aa). Lysine 1007 carries the post-translational modification N6-acetyllysine. Residues 1009 to 1030 are compositionally biased toward basic residues; it reads TLKRKKPILHRRRRVRKRKHHN. Over residues 1031-1042 the composition is skewed to low complexity; that stretch reads SSVVTETISETT. Composition is skewed to acidic residues over residues 1043–1053 and 1065–1079; these read EVLDEPFEDSD and FEME…EESE. Phosphoserine occurs at positions 1090, 1091, and 1115. Disordered stretches follow at residues 1096-1174, 1197-1438, 1455-1533, 1546-1568, and 1631-1707; these read RCQS…RKPG, IKPG…GAYQ, HTDE…PSVS, DLGS…STMG, and TCVV…CSMN. Acidic residues predominate over residues 1107–1120; it reads EEEEEEEESDDADD. Residues 1136–1147 show a composition bias toward polar residues; sequence NSASLEPDTSTP. Residues 1148-1174 are compositionally biased toward basic residues; sequence MKKKKGWPKGKSRKPIHWKKRPGRKPG. Over residues 1204-1229 the composition is skewed to basic and acidic residues; that stretch reads RTQENEEIVEVKEDLLEERKEEMHTE. Composition is skewed to acidic residues over residues 1230–1241 and 1282–1299; these read PDEEAEEEEDTT and EEPQ…DEVT. Over residues 1317-1334 the composition is skewed to basic and acidic residues; it reads HLDSLKTKEPEEQPARED. Lysine 1336 participates in a covalent cross-link: Glycyl lysine isopeptide (Lys-Gly) (interchain with G-Cter in SUMO2). Composition is skewed to basic and acidic residues over residues 1352–1361 and 1393–1414; these read DSRENTKDKD and DSNT…HSEL. Positions 1473-1490 are enriched in low complexity; that stretch reads HNSPISSIPSHPSQSVRS. Polar residues-rich tracts occupy residues 1502 to 1523 and 1550 to 1568; these read GYTQ…NMET and IEST…STMG. Residues 1511 to 1636 form an interaction with RUNX1-2 region; the sequence is GSLSAPSMQN…KSPQTCVVER (126 aa). The interaction with PML stretch occupies residues 1511-1740; that stretch reads GSLSAPSMQN…YERIPGDFGA (230 aa). Composition is skewed to pro residues over residues 1640–1673 and 1682–1698; these read NQQP…PPQP and QPPP…PQQQ. Positions 1912–1947 are required for activation of RUNX1-2; the sequence is SMNMNTLNAMNSYRMTQPMMNSSYHSNPAYMNQTAQ.

The protein belongs to the MYST (SAS/MOZ) family. Component of the MOZ/MORF complex composed at least of ING5, KAT6A, KAT6B, MEAF6 and one of BRPF1, BRD1/BRPF2 and BRPF3. Interacts with RUNX2. Interacts with RUNX1; phosphorylation of RUNX1 enhances the interaction. Interacts with p53/TP53. Interacts with PML and this interaction positively regulates its acetylation activity towards p53/TP53. Post-translationally, autoacetylated. Autoacetylation at Lys-603 is required for proper function. In terms of processing, phosphorylation at Thr-369 by PKB/AKT1 inhibits its interaction with PML and negatively regulates its acetylation activity towards p53/TP53.

It is found in the nucleus. It localises to the nucleolus. Its subcellular location is the nucleoplasm. The protein localises to the PML body. It carries out the reaction L-lysyl-[protein] + acetyl-CoA = N(6)-acetyl-L-lysyl-[protein] + CoA + H(+). In terms of biological role, histone acetyltransferase that acetylates lysine residues in histone H3 and histone H4 (in vitro). Component of the MOZ/MORF complex which has a histone H3 acetyltransferase activity. May act as a transcriptional coactivator for RUNX1 and RUNX2. Acetylates p53/TP53 at 'Lys-120' and 'Lys-382' and controls its transcriptional activity via association with PML. This Mus musculus (Mouse) protein is Histone acetyltransferase KAT6A (Kat6a).